Here is a 50-residue protein sequence, read N- to C-terminus: MLTKYALVAIIVLCCTVLGFTLMVGDSLCELSIRERGMEFKAVLAYESKK.

A helical membrane pass occupies residues 5-25 (YALVAIIVLCCTVLGFTLMVG).

It belongs to the Hok/Gef family.

Its subcellular location is the cell inner membrane. Toxic component of a type I toxin-antitoxin (TA) system. When overexpressed kills cells within minutes; causes collapse of the transmembrane potential and arrest of respiration. Its toxic effect is probably neutralized by an antisense antitoxin Sok RNA. In Escherichia coli O157:H7, this protein is Putative protein HokG (hokG).